Reading from the N-terminus, the 157-residue chain is Transcriptional regulator MraZ (157 aa).

SpoVT-AbrB domains lie at 7-54 and 83-126; these read TYTM…GTSL and TEML…EPER.

This sequence belongs to the MraZ family. In terms of assembly, forms oligomers.

The protein resides in the cytoplasm. The protein localises to the nucleoid. This is Transcriptional regulator MraZ from Azorhizobium caulinodans (strain ATCC 43989 / DSM 5975 / JCM 20966 / LMG 6465 / NBRC 14845 / NCIMB 13405 / ORS 571).